We begin with the raw amino-acid sequence, 89 residues long: DNA/RNA-binding protein Alba (89 aa).

The protein belongs to the histone-like Alba family.

It localises to the cytoplasm. It is found in the chromosome. Functionally, binds double-stranded DNA tightly but without sequence specificity. Involved in DNA compaction. The polypeptide is DNA/RNA-binding protein Alba (Methanococcus maripaludis (strain DSM 14266 / JCM 13030 / NBRC 101832 / S2 / LL)).